A 286-amino-acid chain; its full sequence is Probable 4-deoxy-4-formamido-L-arabinose-phosphoundecaprenol deformylase ArnD (286 aa).

Positions 1–248 constitute a NodB homology domain; it reads MGTKLGVPNL…IAINEGINFC (248 aa).

The protein belongs to the polysaccharide deacetylase family. ArnD deformylase subfamily.

It catalyses the reaction 4-deoxy-4-formamido-alpha-L-arabinopyranosyl di-trans,octa-cis-undecaprenyl phosphate + H2O = 4-amino-4-deoxy-alpha-L-arabinopyranosyl di-trans,octa-cis-undecaprenyl phosphate + formate. It participates in glycolipid biosynthesis; 4-amino-4-deoxy-alpha-L-arabinose undecaprenyl phosphate biosynthesis; 4-amino-4-deoxy-alpha-L-arabinose undecaprenyl phosphate from UDP-4-deoxy-4-formamido-beta-L-arabinose and undecaprenyl phosphate: step 2/2. Its pathway is bacterial outer membrane biogenesis; lipopolysaccharide biosynthesis. Its function is as follows. Catalyzes the deformylation of 4-deoxy-4-formamido-L-arabinose-phosphoundecaprenol to 4-amino-4-deoxy-L-arabinose-phosphoundecaprenol. The modified arabinose is attached to lipid A and is required for resistance to polymyxin and cationic antimicrobial peptides. This Wigglesworthia glossinidia brevipalpis protein is Probable 4-deoxy-4-formamido-L-arabinose-phosphoundecaprenol deformylase ArnD.